A 258-amino-acid polypeptide reads, in one-letter code: Glucose 1-dehydrogenase 2 (258 aa).

Residue 11 to 35 (IVTGSSKGIGKAIAERFGKEKMNVV) coordinates NADP(+). A substrate-binding site is contributed by serine 146. Tyrosine 159 (proton acceptor) is an active-site residue.

It belongs to the short-chain dehydrogenases/reductases (SDR) family. Homotetramer.

The enzyme catalyses D-glucose + NAD(+) = D-glucono-1,5-lactone + NADH + H(+). The catalysed reaction is D-glucose + NADP(+) = D-glucono-1,5-lactone + NADPH + H(+). This is Glucose 1-dehydrogenase 2 (ycdF) from Bacillus subtilis (strain 168).